The chain runs to 394 residues: Actin-related protein 2 (394 aa).

N-acetylmethionine is present on Met-1. ATP contacts are provided by residues 160–162 and 214–218; these read GDG and RMIKE. Lys-299 is modified (N6-acetyllysine). Position 305–310 (305–310) interacts with ATP; the sequence is GGSTMY. N6-acetyllysine is present on Lys-322.

Belongs to the actin family. ARP2 subfamily. As to quaternary structure, component of the Arp2/3 complex composed of ACTR2/ARP2, ACTR3/ARP3, ARPC1B/p41-ARC, ARPC2/p34-ARC, ARPC3/p21-ARC, ARPC4/p20-ARC and ARPC5/p16-ARC. Interacts with AVIL.

The protein localises to the cytoplasm. The protein resides in the cytoskeleton. It localises to the cell projection. It is found in the nucleus. ATP-binding component of the Arp2/3 complex, a multiprotein complex that mediates actin polymerization upon stimulation by nucleation-promoting factor (NPF). The Arp2/3 complex mediates the formation of branched actin networks in the cytoplasm, providing the force for cell motility. Seems to contact the pointed end of the daughter actin filament. In podocytes, required for the formation of lamellipodia downstream of AVIL and PLCE1 regulation. In addition to its role in the cytoplasmic cytoskeleton, the Arp2/3 complex also promotes actin polymerization in the nucleus, thereby regulating gene transcription and repair of damaged DNA. The Arp2/3 complex promotes homologous recombination (HR) repair in response to DNA damage by promoting nuclear actin polymerization, leading to drive motility of double-strand breaks (DSBs). The protein is Actin-related protein 2 (ACTR2) of Bos taurus (Bovine).